A 542-amino-acid chain; its full sequence is Neurofilament light polypeptide (542 aa).

Ser2 is modified (N-acetylserine). The interval 2–93 (SSFSYEPYFS…KSIRTQEKAQ (92 aa)) is head. O-linked (GlcNAc) threonine glycosylation occurs at Thr21. Arg23 carries the post-translational modification Asymmetric dimethylarginine; alternate. Arg23 bears the Omega-N-methylarginine; alternate mark. Residue Ser27 is glycosylated (O-linked (GlcNAc) serine). Arg30 bears the Omega-N-methylarginine mark. Phosphotyrosine is present on Tyr43. Phosphoserine is present on residues Ser56, Ser67, and Ser103. The IF rod domain occupies 90 to 401 (EKAQLQDLND…KLLEGEETRL (312 aa)). Residues 94-125 (LQDLNDRFASFIERVHELEQQNKVLEAELLVL) are coil 1A. Residues 126–138 (RQKHSEPSRFRAL) are linker 1. Residues 139-234 (YEQEIRDLRL…KVHEEEIAEL (96 aa)) are coil 1B. The tract at residues 235–253 (QAQIQYAQISVEMDVSSKP) is linker 12. A coil 2A region spans residues 254-272 (DLSAALKDIRAQYEKLAAK). Residues 273-281 (NMQNAEEWF) are linker 2. The interval 282-397 (KSRFTVLTES…AAYRKLLEGE (116 aa)) is coil 2B. The segment at 382-392 (ALDIEIAAYRK) is epitope; recognized by IF-specific monoclonal antibody. Residues 398–444 (ETRLSFTSVGSITSGYSQSSQVFGRSAYSGLQSSSYLMSARAFPAYY) are tail, subdomain A. Positions 398-542 (ETRLSFTSVG…GEEQAAKKKD (145 aa)) are tail. The segment at 445–542 (TSHVQEEQSE…GEEQAAKKKD (98 aa)) is tail, subdomain B (acidic). Positions 451 to 542 (EQSEVEETIE…GEEQAAKKKD (92 aa)) are disordered. At Ser453 the chain carries Phosphoserine. The span at 460–471 (EATKAEEAKDEP) shows a compositional bias: basic and acidic residues. A compositionally biased stretch (acidic residues) spans 472–527 (PSEGEAEEEEKEKEEGEEEEGAEEEEAAKDESEDAKEEEGGEGEEEDTKESEEEEK). Residues Ser473 and Ser503 each carry the phosphoserine modification. Thr519 carries the post-translational modification Phosphothreonine. Ser522 and Ser531 each carry phosphoserine. A compositionally biased stretch (basic and acidic residues) spans 528 to 542 (KEESAGEEQAAKKKD).

The protein belongs to the intermediate filament family. Forms homodimers (in vitro). Forms heterodimers with NEFH or NEFM; which can further hetero-oligomerize (in vitro). Forms heterodimers with INA (in vitro). Interacts with ARHGEF28. Interacts with TRIM2. Post-translationally, O-glycosylated; contains three N-acetylglucosamine side chains. Phosphorylated in the head and rod regions by the PKC kinase PKN1, leading to the inhibition of polymerization. In terms of processing, ubiquitinated in the presence of TRIM2 and UBE2D1. Expressed in the dorsal root ganglion neurons (at protein level).

The protein resides in the cell projection. The protein localises to the axon. It localises to the cytoplasm. Its subcellular location is the cytoskeleton. Its function is as follows. Neurofilaments usually contain three intermediate filament proteins: NEFL, NEFM, and NEFH which are involved in the maintenance of neuronal caliber. May additionally cooperate with the neuronal intermediate filament proteins PRPH and INA to form neuronal filamentous networks. The sequence is that of Neurofilament light polypeptide (Nefl) from Rattus norvegicus (Rat).